A 146-amino-acid chain; its full sequence is Large ribosomal subunit protein uL15 (146 aa).

Over residues 1–13 the composition is skewed to basic and acidic residues; that stretch reads MKLHELKPSEGSR. The disordered stretch occupies residues 1 to 57; that stretch reads MKLHELKPSEGSRKTRNRVGRGIGSGNGKTAGKGHKGQNARSGGGVRPGFEGGQMPL. Composition is skewed to gly residues over residues 21–31 and 42–52; these read RGIGSGNGKTA and SGGGVRPGFEG.

Belongs to the universal ribosomal protein uL15 family. Part of the 50S ribosomal subunit.

Its function is as follows. Binds to the 23S rRNA. The sequence is that of Large ribosomal subunit protein uL15 from Bacillus subtilis (strain 168).